The following is a 371-amino-acid chain: Chaperone protein DnaJ (371 aa).

Positions 6–71 constitute a J domain; sequence DYYEILGVEK…QKRAQYDRFG (66 aa). A disordered region spans residues 104 to 123; the sequence is GGMGGQQRQRRNRNEPRRGS. The CR-type zinc-finger motif lies at 139 to 217; that stretch reads GIEKEIEFDT…CKGKGRVAEH (79 aa). Zn(2+) contacts are provided by cysteine 152, cysteine 155, cysteine 169, cysteine 172, cysteine 191, cysteine 194, cysteine 205, and cysteine 208. CXXCXGXG motif repeat units lie at residues 152 to 159, 169 to 176, 191 to 198, and 205 to 212; these read CDECKGTG, CGTCGGSG, CPTCHGQG, and CKPCKGKG.

It belongs to the DnaJ family. As to quaternary structure, homodimer. The cofactor is Zn(2+).

The protein localises to the cytoplasm. Functionally, participates actively in the response to hyperosmotic and heat shock by preventing the aggregation of stress-denatured proteins and by disaggregating proteins, also in an autonomous, DnaK-independent fashion. Unfolded proteins bind initially to DnaJ; upon interaction with the DnaJ-bound protein, DnaK hydrolyzes its bound ATP, resulting in the formation of a stable complex. GrpE releases ADP from DnaK; ATP binding to DnaK triggers the release of the substrate protein, thus completing the reaction cycle. Several rounds of ATP-dependent interactions between DnaJ, DnaK and GrpE are required for fully efficient folding. Also involved, together with DnaK and GrpE, in the DNA replication of plasmids through activation of initiation proteins. This is Chaperone protein DnaJ from Bdellovibrio bacteriovorus (strain ATCC 15356 / DSM 50701 / NCIMB 9529 / HD100).